A 500-amino-acid chain; its full sequence is Beta-xylosidase (500 aa).

The Proton donor role is filled by E160. The active-site Nucleophile is the E277.

The protein belongs to the glycosyl hydrolase 39 family.

It carries out the reaction Hydrolysis of (1-&gt;4)-beta-D-xylans, to remove successive D-xylose residues from the non-reducing termini.. The polypeptide is Beta-xylosidase (xynB) (Thermoanaerobacterium saccharolyticum (strain DSM 8691 / JW/SL-YS485)).